We begin with the raw amino-acid sequence, 246 residues long: Glandular kallikrein (246 aa).

Residues 1–7 constitute a propeptide that is removed on maturation; that stretch reads APPIQSR. In terms of domain architecture, Peptidase S1 spans 8-243; sequence IIGGRECEKN…YLDWINDTIT (236 aa). Cystine bridges form between Cys-14-Cys-158, Cys-33-Cys-49, Cys-135-Cys-204, Cys-169-Cys-183, and Cys-194-Cys-219. His-48 acts as the Charge relay system in catalysis. N-linked (GlcNAc...) asparagine glycosylation is present at Asn-85. The interval 85–104 is kallikrein (autolysis) loop; sequence NLSLLKXHTKADGKDYSHDL. Asp-103 acts as the Charge relay system in catalysis. Ser-198 functions as the Charge relay system in the catalytic mechanism. Asn-239 carries an N-linked (GlcNAc...) asparagine glycan.

This sequence belongs to the peptidase S1 family. Kallikrein subfamily. Monomer.

It catalyses the reaction Preferential cleavage of Arg-|-Xaa bonds in small molecule substrates. Highly selective action to release kallidin (lysyl-bradykinin) from kininogen involves hydrolysis of Met-|-Xaa or Leu-|-Xaa.. Its function is as follows. Glandular kallikreins cleave Met-Lys and Arg-Ser bonds in kininogen to release Lys-bradykinin. This is Glandular kallikrein from Sus scrofa (Pig).